The chain runs to 306 residues: Tyrosine recombinase XerC (306 aa).

One can recognise a Core-binding (CB) domain in the interval 2 to 81; that stretch reads AKASAAIEEF…ALRQFYGFLV (80 aa). One can recognise a Tyr recombinase domain in the interval 102-283; that stretch reads PLPKTLSHKE…DAARLVALVN (182 aa). Catalysis depends on residues Arg146, Lys170, His235, Arg238, and His261. Tyr270 functions as the O-(3'-phospho-DNA)-tyrosine intermediate in the catalytic mechanism.

It belongs to the 'phage' integrase family. XerC subfamily. As to quaternary structure, forms a cyclic heterotetrameric complex composed of two molecules of XerC and two molecules of XerD.

The protein localises to the cytoplasm. Functionally, site-specific tyrosine recombinase, which acts by catalyzing the cutting and rejoining of the recombining DNA molecules. The XerC-XerD complex is essential to convert dimers of the bacterial chromosome into monomers to permit their segregation at cell division. It also contributes to the segregational stability of plasmids. The chain is Tyrosine recombinase XerC from Erythrobacter litoralis (strain HTCC2594).